Consider the following 555-residue polypeptide: CTP synthase (555 aa).

Positions 1-271 (MVKRGKKTKY…DDKLAELFNI (271 aa)) are amidoligase domain. CTP is bound at residue S19. S19 is a UTP binding site. ATP is bound by residues 20-25 (SLGKGL) and D77. Positions 77 and 145 each coordinate Mg(2+). CTP-binding positions include 152 to 154 (DIE), 192 to 197 (KTKPTQ), and K228. Residues 192–197 (KTKPTQ) and K228 each bind UTP. In terms of domain architecture, Glutamine amidotransferase type-1 spans 297 to 537 (RIGIVGKYVE…VKAALEHRDA (241 aa)). G358 provides a ligand contact to L-glutamine. The Nucleophile; for glutamine hydrolysis role is filled by C385. L-glutamine-binding positions include 386-389 (LGLQ), E409, and R466. Catalysis depends on residues H510 and E512. The interval 535–555 (RDAQQRQPPAEVKKLAVGKNG) is disordered.

It belongs to the CTP synthase family. In terms of assembly, homotetramer.

It catalyses the reaction UTP + L-glutamine + ATP + H2O = CTP + L-glutamate + ADP + phosphate + 2 H(+). The enzyme catalyses L-glutamine + H2O = L-glutamate + NH4(+). It carries out the reaction UTP + NH4(+) + ATP = CTP + ADP + phosphate + 2 H(+). It functions in the pathway pyrimidine metabolism; CTP biosynthesis via de novo pathway; CTP from UDP: step 2/2. With respect to regulation, allosterically activated by GTP, when glutamine is the substrate; GTP has no effect on the reaction when ammonia is the substrate. The allosteric effector GTP functions by stabilizing the protein conformation that binds the tetrahedral intermediate(s) formed during glutamine hydrolysis. Inhibited by the product CTP, via allosteric rather than competitive inhibition. Catalyzes the ATP-dependent amination of UTP to CTP with either L-glutamine or ammonia as the source of nitrogen. Regulates intracellular CTP levels through interactions with the four ribonucleotide triphosphates. The chain is CTP synthase from Anaeromyxobacter sp. (strain K).